We begin with the raw amino-acid sequence, 212 residues long: Small ribosomal subunit protein uS4c (212 aa).

An S4 RNA-binding domain is found at 89 to 152 (MRLDNIIFRL…RSRALVDKNL (64 aa)).

Belongs to the universal ribosomal protein uS4 family. In terms of assembly, part of the 30S ribosomal subunit. Contacts protein S5. The interaction surface between S4 and S5 is involved in control of translational fidelity.

The protein localises to the plastid. It is found in the chloroplast. Functionally, one of the primary rRNA binding proteins, it binds directly to 16S rRNA where it nucleates assembly of the body of the 30S subunit. With S5 and S12 plays an important role in translational accuracy. This is Small ribosomal subunit protein uS4c (rps4) from Staurastrum punctulatum (Green alga).